The following is a 625-amino-acid chain: DNA mismatch repair protein MutL (625 aa).

The tract at residues 404-427 (PPPRNAPQSTGMPSMAGTGLPATS) is disordered.

The protein belongs to the DNA mismatch repair MutL/HexB family.

In terms of biological role, this protein is involved in the repair of mismatches in DNA. It is required for dam-dependent methyl-directed DNA mismatch repair. May act as a 'molecular matchmaker', a protein that promotes the formation of a stable complex between two or more DNA-binding proteins in an ATP-dependent manner without itself being part of a final effector complex. The polypeptide is DNA mismatch repair protein MutL (Xanthomonas oryzae pv. oryzae (strain MAFF 311018)).